The primary structure comprises 141 residues: MAKKVIKIVKLQIPAGKANPAPPVGPALGQAGVNIMAFCKEFNARTADQAGLIIPVEITVFEDRSFTFITKTPPAAVLLKKAAGIESGSGEPNRNKVATIKRDKVREIAELKMPDLNAASIEAAMRMVEGTARSMGIVIED.

This sequence belongs to the universal ribosomal protein uL11 family. Part of the ribosomal stalk of the 50S ribosomal subunit. Interacts with L10 and the large rRNA to form the base of the stalk. L10 forms an elongated spine to which L12 dimers bind in a sequential fashion forming a multimeric L10(L12)X complex. In terms of processing, one or more lysine residues are methylated.

Forms part of the ribosomal stalk which helps the ribosome interact with GTP-bound translation factors. This chain is Large ribosomal subunit protein uL11, found in Geobacillus thermodenitrificans (strain NG80-2).